Consider the following 232-residue polypeptide: 5'-methylthioadenosine/S-adenosylhomocysteine nucleosidase (232 aa).

Glutamate 12 (proton acceptor) is an active-site residue. Residues glycine 78, isoleucine 152, and 173–174 each bind substrate; that span reads ME. Aspartate 197 serves as the catalytic Proton donor.

This sequence belongs to the PNP/UDP phosphorylase family. MtnN subfamily. Homodimer.

It carries out the reaction S-adenosyl-L-homocysteine + H2O = S-(5-deoxy-D-ribos-5-yl)-L-homocysteine + adenine. The catalysed reaction is S-methyl-5'-thioadenosine + H2O = 5-(methylsulfanyl)-D-ribose + adenine. It catalyses the reaction 5'-deoxyadenosine + H2O = 5-deoxy-D-ribose + adenine. It functions in the pathway amino-acid biosynthesis; L-methionine biosynthesis via salvage pathway; S-methyl-5-thio-alpha-D-ribose 1-phosphate from S-methyl-5'-thioadenosine (hydrolase route): step 1/2. Its function is as follows. Catalyzes the irreversible cleavage of the glycosidic bond in both 5'-methylthioadenosine (MTA) and S-adenosylhomocysteine (SAH/AdoHcy) to adenine and the corresponding thioribose, 5'-methylthioribose and S-ribosylhomocysteine, respectively. Also cleaves 5'-deoxyadenosine, a toxic by-product of radical S-adenosylmethionine (SAM) enzymes, into 5-deoxyribose and adenine. Thus, is required for in vivo function of the radical SAM enzymes biotin synthase and lipoic acid synthase, that are inhibited by 5'-deoxyadenosine accumulation. This is 5'-methylthioadenosine/S-adenosylhomocysteine nucleosidase from Salmonella agona (strain SL483).